A 564-amino-acid polypeptide reads, in one-letter code: Diacylglycerol kinase epsilon (564 aa).

Residues 20-40 traverse the membrane as a helical segment; it reads LVLWTLCSVLLPVFITLWCSL. Phorbol-ester/DAG-type zinc fingers lie at residues 57 to 106 and 121 to 174; these read KHCW…RFPC and PHHW…SEKC. Positions 212-353 constitute a DAGKc domain; that stretch reads KQWTPLIILA…LDRWKVQVTN (142 aa).

Belongs to the eukaryotic diacylglycerol kinase family. In terms of tissue distribution, highly expressed in brain and heart. In brain, highly expressed in Purkinje cells of the cerebellum, pyramidal cells of the hippocampus, mitral cells of the olfactory bulb, and neurons of the substantia nigra. Lower expression in neurons of the thalamus, superior olive, and lateral reticular nucleus is also detected. Expressed in platelets.

It is found in the membrane. The protein localises to the cytoplasm. It catalyses the reaction a 1,2-diacyl-sn-glycerol + ATP = a 1,2-diacyl-sn-glycero-3-phosphate + ADP + H(+). The catalysed reaction is 1-hexadecanoyl-2-(5Z,8Z,11Z,14Z-eicosatetraenoyl)-sn-glycerol + ATP = 1-hexadecanoyl-2-(5Z,8Z,11Z,14Z-eicosatetraenoyl)-sn-glycero-3-phosphate + ADP + H(+). The enzyme catalyses 1-octadecanoyl-2-(5Z,8Z,11Z,14Z-eicosatetraenoyl)-sn-glycerol + ATP = 1-octadecanoyl-2-(5Z,8Z,11Z,14Z-eicosatetraenoyl)-sn-glycero-3-phosphate + ADP + H(+). It carries out the reaction 1-eicosanoyl-2-(5Z,8Z,11Z,14Z)-eicosatetraenoyl-sn-glycerol + ATP = 1-eicosanoyl-2-(5Z,8Z,11Z,14Z)-eicosatetraenoyl-sn-glycero-3-phosphate + ADP + H(+). It catalyses the reaction 1,2-di-(5Z,8Z,11Z,14Z)-eicosatetraenoyl-sn-glycerol + ATP = 1,2-di-(5Z,8Z,11Z,14Z)-eicosatetraenoyl-sn-glycero-3-phosphate + ADP + H(+). The catalysed reaction is 1-octadecanoyl-2-(9Z,12Z)-octadecadienoyl-sn-glycerol + ATP = 1-octadecanoyl-2-(9Z,12Z-octadecadienoyl)-sn-glycero-3-phosphate + ADP + H(+). The enzyme catalyses 1,2-di-(9Z,12Z-octadecadienoyl)-sn-glycerol + ATP = 1,2-di-(9Z,12Z-octadecadienoyl)-sn-glycero-3-phosphate + ADP + H(+). It carries out the reaction 1,2-di-(9Z-octadecenoyl)-sn-glycerol + ATP = 1,2-di-(9Z-octadecenoyl)-sn-glycero-3-phosphate + ADP + H(+). Its pathway is lipid metabolism; glycerolipid metabolism. Membrane-bound diacylglycerol kinase that converts diacylglycerol/DAG into phosphatidic acid/phosphatidate/PA and regulates the respective levels of these two bioactive lipids. Thereby, acts as a central switch between the signaling pathways activated by these second messengers with different cellular targets and opposite effects in numerous biological processes. Also plays an important role in the biosynthesis of complex lipids. Displays specificity for diacylglycerol substrates with an arachidonoyl acyl chain at the sn-2 position, with the highest activity toward 1-octadecanoyl-2-(5Z,8Z,11Z,14Z-eicosatetraenoyl)-sn-glycerol the main diacylglycerol intermediate within the phosphatidylinositol turnover cycle. Can also phosphorylate diacylglycerol substrates with a linoleoyl acyl chain at the sn-2 position but much less efficiently. This is Diacylglycerol kinase epsilon (Dgke) from Mus musculus (Mouse).